A 297-amino-acid chain; its full sequence is 2-phospho-L-lactate transferase (297 aa).

Residue aspartate 49 coordinates 7,8-didemethyl-8-hydroxy-5-deazariboflavin.

The protein belongs to the CofD family. As to quaternary structure, homodimer. It depends on Mg(2+) as a cofactor.

The catalysed reaction is (2S)-lactyl-2-diphospho-5'-guanosine + 7,8-didemethyl-8-hydroxy-5-deazariboflavin = oxidized coenzyme F420-0 + GMP + H(+). It functions in the pathway cofactor biosynthesis; coenzyme F420 biosynthesis. In terms of biological role, catalyzes the transfer of the 2-phospholactate moiety from (2S)-lactyl-2-diphospho-5'-guanosine to 7,8-didemethyl-8-hydroxy-5-deazariboflavin (FO) with the formation of oxidized coenzyme F420-0 and GMP. The polypeptide is 2-phospho-L-lactate transferase (Methanospirillum hungatei JF-1 (strain ATCC 27890 / DSM 864 / NBRC 100397 / JF-1)).